A 393-amino-acid polypeptide reads, in one-letter code: Beta-1,3-galactosyltransferase 7 (393 aa).

A helical; Signal-anchor for type II membrane protein transmembrane segment spans residues 9-29; that stretch reads VISLKWVPFLCISFFALGAIF. The tract at residues 89–112 is disordered; it reads SLDKSVSTLSSTRSSQEMVDGSET. Residues 93–103 show a composition bias toward low complexity; sequence SVSTLSSTRSS.

Belongs to the glycosyltransferase 31 family. It depends on Mn(2+) as a cofactor. In terms of tissue distribution, expressed in leaves, stems, flowers and siliques.

The protein localises to the golgi apparatus membrane. Its pathway is protein modification; protein glycosylation. Beta-1,3-galactosyltransferase that transfers galactose from UDP-galactose to substrates with a terminal glycosyl residue. This Arabidopsis thaliana (Mouse-ear cress) protein is Beta-1,3-galactosyltransferase 7 (B3GALT7).